The primary structure comprises 565 residues: Transmembrane 7 superfamily member 3 (565 aa).

The signal sequence occupies residues 1–21 (MWRLRLLVLAVLAAGSAEAQA). Residues N22, N56, N70, and N259 are each glycosylated (N-linked (GlcNAc...) asparagine). A run of 7 helical transmembrane segments spans residues 287 to 307 (VSTK…CFFG), 315 to 335 (LFFV…TRLT), 341 to 361 (VRLA…VASW), 364 to 384 (FGIL…LVSS), 402 to 422 (VFWV…MGCL), 427 to 447 (ILAC…SYMF), and 478 to 498 (NDYI…TLQI).

The protein localises to the cell membrane. Functionally, involved in the inhibition of cytokine-induced death of pancreatic beta cells. Involved in the promotion of insulin secretion from pancreatic beta cells. Is a downstream transcriptional target of p53/TP53, and acts as a pro-survival homeostatic factor that attenuates the development of cellular stress. Maintains protein homeostasis and promotes cell survival through attenuation of endoplasmic reticulum (ER) stress and the subsequent induction of unfolded protein response (UPR). This is Transmembrane 7 superfamily member 3 (Tm7sf3) from Mus musculus (Mouse).